Here is a 1225-residue protein sequence, read N- to C-terminus: uncharacterized protein (1225 aa).

Residues 1-15 (MSSQAEPSKGASNAD) are compositionally biased toward polar residues. A disordered region spans residues 1-104 (MSSQAEPSKG…VDGVPTRPVS (104 aa)). Positions 16–25 (PNEKVEKMHL) are enriched in basic and acidic residues. The span at 43 to 65 (ASPSDKNNLNPQSAGVSEVQVQD) shows a compositional bias: polar residues. Residues 167–187 (FLFGYLRFGFLSLFIIMAVCI) traverse the membrane as a helical segment. The 206-residue stretch at 217-422 (DSETVTWLNT…SPNVYELDIE (206 aa)) folds into the SMP-LTD domain. C2 domains lie at 413-534 (SPNV…NDAF), 559-668 (DSGE…LLWF), and 685-803 (KPAQ…GALM). Serine 843 bears the Phosphoserine mark. The tract at residues 867–890 (PESQKTPTAVDNTSTSRGSTSVKT) is disordered. Over residues 869-890 (SQKTPTAVDNTSTSRGSTSVKT) the composition is skewed to polar residues. The C2 4 domain maps to 1019-1137 (RLTPVPVKLE…QQQQQTNYEI (119 aa)). Ca(2+) contacts are provided by aspartate 1053, aspartate 1059, aspartate 1107, aspartate 1109, and aspartate 1115.

Requires Ca(2+) as cofactor.

Its subcellular location is the endoplasmic reticulum membrane. This is an uncharacterized protein from Schizosaccharomyces pombe (strain 972 / ATCC 24843) (Fission yeast).